Here is a 256-residue protein sequence, read N- to C-terminus: Cytochrome c-type biogenesis protein CcmE homolog, mitochondrial (256 aa).

A mitochondrion-targeting transit peptide spans 1–57 (MAARLLFRRSSQILRSIQRNPQISSSFESPPCPIFHSLTTASPDPSRLSSLTFLRSL). Residues 84–106 (LWTYALTFSCIAGFVVIVLNQFQ) traverse the membrane as a helical segment. Residues His-222 and Tyr-226 each contribute to the heme site.

The protein belongs to the CcmE/CycJ family.

Its subcellular location is the mitochondrion inner membrane. It localises to the mitochondrion intermembrane space. In terms of biological role, heme-binding chaperone that may be involved in cytochrome c maturation in mitochondria. The sequence is that of Cytochrome c-type biogenesis protein CcmE homolog, mitochondrial from Arabidopsis thaliana (Mouse-ear cress).